The chain runs to 234 residues: MLFLHSVVQGTGTLCTLAAWILLALVMTGCQSSTTSKFQLFSLATNVAQINVGYFNMCVLSANATLICKPQFTGCPGLTSISLTDVRSKFLINEVHPWMIVFSFCVCGVSFLMGVVSSLPLIGRLEFLRNIRISLSFFSFFSILVTALFAHVAVSSFVMAVGNGTQNRVTASLGKKAMIFLWCSMGLVTLTGITDSIILLVTSRTKKIRKTILEKSKVLTPSSSFSSKSSTTKY.

Residues 1–32 form the signal peptide; the sequence is MLFLHSVVQGTGTLCTLAAWILLALVMTGCQS. The Extracellular segment spans residues 33-96; the sequence is STTSKFQLFS…RSKFLINEVH (64 aa). The helical transmembrane segment at 97 to 117 threads the bilayer; it reads PWMIVFSFCVCGVSFLMGVVS. Over 118–132 the chain is Cytoplasmic; sequence SLPLIGRLEFLRNIR. Residues 133–153 traverse the membrane as a helical segment; it reads ISLSFFSFFSILVTALFAHVA. The Extracellular portion of the chain corresponds to 154 to 178; that stretch reads VSSFVMAVGNGTQNRVTASLGKKAM. Residues 179 to 199 form a helical membrane-spanning segment; that stretch reads IFLWCSMGLVTLTGITDSIIL. The Cytoplasmic portion of the chain corresponds to 200 to 234; it reads LVTSRTKKIRKTILEKSKVLTPSSSFSSKSSTTKY.

This sequence belongs to the SUR7 family.

The protein resides in the cell membrane. Its subcellular location is the cell tip. Its function is as follows. Cell membrane protein which plays a relevant role in coordinating membrane organization and cell wall remodeling during mating. The chain is Cell fusion protein dni1 (dni1) from Schizosaccharomyces pombe (strain 972 / ATCC 24843) (Fission yeast).